Here is a 222-residue protein sequence, read N- to C-terminus: Iron-sulfur cluster repair protein YtfE (222 aa).

Belongs to the RIC family. YtfE subfamily. As to quaternary structure, homodimer.

The protein resides in the cytoplasm. Di-iron-containing protein involved in the repair of iron-sulfur clusters damaged by oxidative and nitrosative stress conditions. The protein is Iron-sulfur cluster repair protein YtfE of Musicola paradisiaca (strain Ech703) (Dickeya paradisiaca).